Reading from the N-terminus, the 235-residue chain is Purine nucleoside phosphorylase DeoD-type (235 aa).

Residue H4 coordinates a purine D-ribonucleoside. Phosphate contacts are provided by residues G20, R24, R43, and 87 to 90 (RVGT). A purine D-ribonucleoside-binding positions include 178 to 180 (EME) and 202 to 203 (SD). Catalysis depends on D203, which acts as the Proton donor.

This sequence belongs to the PNP/UDP phosphorylase family. As to quaternary structure, homohexamer; trimer of homodimers.

The catalysed reaction is a purine D-ribonucleoside + phosphate = a purine nucleobase + alpha-D-ribose 1-phosphate. It catalyses the reaction a purine 2'-deoxy-D-ribonucleoside + phosphate = a purine nucleobase + 2-deoxy-alpha-D-ribose 1-phosphate. Catalyzes the reversible phosphorolytic breakdown of the N-glycosidic bond in the beta-(deoxy)ribonucleoside molecules, with the formation of the corresponding free purine bases and pentose-1-phosphate. The chain is Purine nucleoside phosphorylase DeoD-type from Geobacillus sp. (strain WCH70).